Reading from the N-terminus, the 511-residue chain is MEFSPRAAELTTLLESRITNFYTNFQVDEIGRVISVGDGIARVYGLNEIQAGEMVEFASGVKGIALNLENENVGIVVFGSDTAIKEGDLVKRTGSIVDVPAGKSLLGRVVDALGVPIDGRGALGDHERRRVEVKVPGIIERKSVHEPMQTGLKAVDSLVPIGRGQRELIIGDRQTGKTAIAIDTILNQKQMNSRATSESETLYCVYVAIGQKRSTVAQLVQILSEGNALEYSILVAATASDPAPLQFLAPYSGCAMGEYFRDNGMHALIIYDDLSKQAVAYRQMSLLLRRPPGREAFPGDVFYLHSRLLERAAKRSDQTGAGSLTALPVIETQAGDVSAYIPTNVISITDGQICLETELFYRGIRPAINVGLSVSRVGSAAQLKAMKQVCGSLKLELAQYREVAAFAQFGSDLDAATQALLNRGARLTEILKQPQYAPLPIEKQIIVIYAAVNGFCDRMPLDRISQYERAIPQSVKQELLQSLVEKGGLNNERKIEPDAFLKENAKPYIKG.

171 to 178 lines the ATP pocket; sequence GDRQTGKT.

Belongs to the ATPase alpha/beta chains family. In terms of assembly, F-type ATPases have 2 components, CF(1) - the catalytic core - and CF(0) - the membrane proton channel. CF(1) has five subunits: alpha(3), beta(3), gamma(1), delta(1), epsilon(1). CF(0) has three main subunits: a, b and c.

It localises to the mitochondrion. The protein resides in the mitochondrion inner membrane. In terms of biological role, mitochondrial membrane ATP synthase (F(1)F(0) ATP synthase or Complex V) produces ATP from ADP in the presence of a proton gradient across the membrane which is generated by electron transport complexes of the respiratory chain. F-type ATPases consist of two structural domains, F(1) - containing the extramembraneous catalytic core, and F(0) - containing the membrane proton channel, linked together by a central stalk and a peripheral stalk. During catalysis, ATP synthesis in the catalytic domain of F(1) is coupled via a rotary mechanism of the central stalk subunits to proton translocation. Subunits alpha and beta form the catalytic core in F(1). Rotation of the central stalk against the surrounding alpha(3)beta(3) subunits leads to hydrolysis of ATP in three separate catalytic sites on the beta subunits. Subunit alpha does not bear the catalytic high-affinity ATP-binding sites. In Oenothera biennis (German evening primrose), this protein is ATP synthase subunit alpha, mitochondrial (ATPA).